Reading from the N-terminus, the 201-residue chain is 3-isopropylmalate dehydratase small subunit (201 aa).

This sequence belongs to the LeuD family. LeuD type 1 subfamily. As to quaternary structure, heterodimer of LeuC and LeuD.

The enzyme catalyses (2R,3S)-3-isopropylmalate = (2S)-2-isopropylmalate. The protein operates within amino-acid biosynthesis; L-leucine biosynthesis; L-leucine from 3-methyl-2-oxobutanoate: step 2/4. Functionally, catalyzes the isomerization between 2-isopropylmalate and 3-isopropylmalate, via the formation of 2-isopropylmaleate. The chain is 3-isopropylmalate dehydratase small subunit from Ruegeria pomeroyi (strain ATCC 700808 / DSM 15171 / DSS-3) (Silicibacter pomeroyi).